Here is a 236-residue protein sequence, read N- to C-terminus: 2-C-methyl-D-erythritol 4-phosphate cytidylyltransferase (236 aa).

The protein belongs to the IspD/TarI cytidylyltransferase family. IspD subfamily. Homodimer.

The enzyme catalyses 2-C-methyl-D-erythritol 4-phosphate + CTP + H(+) = 4-CDP-2-C-methyl-D-erythritol + diphosphate. Its pathway is isoprenoid biosynthesis; isopentenyl diphosphate biosynthesis via DXP pathway; isopentenyl diphosphate from 1-deoxy-D-xylulose 5-phosphate: step 2/6. Functionally, catalyzes the formation of 4-diphosphocytidyl-2-C-methyl-D-erythritol from CTP and 2-C-methyl-D-erythritol 4-phosphate (MEP). This Salmonella agona (strain SL483) protein is 2-C-methyl-D-erythritol 4-phosphate cytidylyltransferase.